The sequence spans 211 residues: Redox-sensing transcriptional repressor Rex (211 aa).

Residues 17–56 constitute a DNA-binding region (H-T-H motif); the sequence is LYYRFIQNFAQEGMERISSKELSEAMKIDSATIRRDFSYF. 91–96 contacts NAD(+); it reads GVGNLG.

This sequence belongs to the transcriptional regulatory Rex family. Homodimer.

The protein localises to the cytoplasm. In terms of biological role, modulates transcription in response to changes in cellular NADH/NAD(+) redox state. In Lysinibacillus sphaericus (strain C3-41), this protein is Redox-sensing transcriptional repressor Rex.